The primary structure comprises 23 residues: Putative gene 50 protein (23 aa).

The polypeptide is Putative gene 50 protein (50) (Bacillus subtilis (Bacteriophage SP01)).